The sequence spans 273 residues: F-actin-capping protein subunit alpha (273 aa).

It belongs to the F-actin-capping protein alpha subunit family. As to quaternary structure, component of the F-actin capping complex, composed of a heterodimer of an alpha and a beta subunit.

It localises to the cytoplasm. The protein resides in the cytoskeleton. The protein localises to the actin patch. F-actin-capping proteins bind in a Ca(2+)-independent manner to the fast growing ends of actin filaments (barbed end) thereby blocking the exchange of subunits at these ends. Unlike other capping proteins (such as gelsolin and severin), these proteins do not sever actin filaments. The chain is F-actin-capping protein subunit alpha (fac-1) from Neurospora crassa (strain ATCC 24698 / 74-OR23-1A / CBS 708.71 / DSM 1257 / FGSC 987).